The following is an 815-amino-acid chain: Leucine--tRNA ligase (815 aa).

The 'HIGH' region motif lies at 42-52 (PYPSGRLHMGH). Positions 574–578 (KMSKS) match the 'KMSKS' region motif. K577 lines the ATP pocket.

It belongs to the class-I aminoacyl-tRNA synthetase family.

The protein localises to the cytoplasm. The enzyme catalyses tRNA(Leu) + L-leucine + ATP = L-leucyl-tRNA(Leu) + AMP + diphosphate. The chain is Leucine--tRNA ligase from Marinomonas sp. (strain MWYL1).